The following is a 170-amino-acid chain: Transcriptional repressor NrdR (170 aa).

Residues 3–34 (CPFCGTQDTKVVDSRLVSEGAQVRRRRTCIHC) fold into a zinc finger. The ATP-cone domain occupies 49-139 (PKLIKSDGSR…VYRSFKDISE (91 aa)). A disordered region spans residues 151–170 (SVSIPKSKKTAPESKKEDQA). The span at 160-170 (TAPESKKEDQA) shows a compositional bias: basic and acidic residues.

This sequence belongs to the NrdR family. It depends on Zn(2+) as a cofactor.

Negatively regulates transcription of bacterial ribonucleotide reductase nrd genes and operons by binding to NrdR-boxes. The sequence is that of Transcriptional repressor NrdR from Marinomonas sp. (strain MWYL1).